The sequence spans 110 residues: Large ribosomal subunit protein uL24 (110 aa).

This sequence belongs to the universal ribosomal protein uL24 family. Part of the 50S ribosomal subunit.

One of two assembly initiator proteins, it binds directly to the 5'-end of the 23S rRNA, where it nucleates assembly of the 50S subunit. Its function is as follows. One of the proteins that surrounds the polypeptide exit tunnel on the outside of the subunit. In Roseiflexus sp. (strain RS-1), this protein is Large ribosomal subunit protein uL24.